Reading from the N-terminus, the 276-residue chain is Mitochondrial outer membrane protein porin 1 (276 aa).

The protein belongs to the eukaryotic mitochondrial porin (TC 1.B.8.1) family. Expressed in shoot meristems, root meristematic zone, lateral roots, leaves, stigma and anthers.

The protein localises to the mitochondrion outer membrane. In terms of biological role, forms a channel through the mitochondrial outer membrane that allows diffusion of small hydrophilic molecules. The channel adopts an open conformation at low or zero membrane potential and a closed conformation at potentials above 30-40 mV. The open state has a weak anion selectivity whereas the closed state is cation-selective. Involved in plant development at reproductive stage, is important for pollen development and may regulate hydrogen peroxide generation during disease resistance. The polypeptide is Mitochondrial outer membrane protein porin 1 (VDAC1) (Arabidopsis thaliana (Mouse-ear cress)).